The chain runs to 205 residues: Pyridoxine/pyridoxamine 5'-phosphate oxidase (205 aa).

FMN contacts are provided by residues 53–58 (RMVLLK), 68–69 (YT), K75, and Q97. K58 contributes to the substrate binding site. 3 residues coordinate substrate: Y115, R119, and S123. FMN is bound by residues 132–133 (QS) and W177. Residue 183–185 (RLH) participates in substrate binding. Residue R187 coordinates FMN.

It belongs to the pyridoxamine 5'-phosphate oxidase family. Homodimer. It depends on FMN as a cofactor.

It carries out the reaction pyridoxamine 5'-phosphate + O2 + H2O = pyridoxal 5'-phosphate + H2O2 + NH4(+). It catalyses the reaction pyridoxine 5'-phosphate + O2 = pyridoxal 5'-phosphate + H2O2. It participates in cofactor metabolism; pyridoxal 5'-phosphate salvage; pyridoxal 5'-phosphate from pyridoxamine 5'-phosphate: step 1/1. The protein operates within cofactor metabolism; pyridoxal 5'-phosphate salvage; pyridoxal 5'-phosphate from pyridoxine 5'-phosphate: step 1/1. Catalyzes the oxidation of either pyridoxine 5'-phosphate (PNP) or pyridoxamine 5'-phosphate (PMP) into pyridoxal 5'-phosphate (PLP). The chain is Pyridoxine/pyridoxamine 5'-phosphate oxidase from Mesorhizobium japonicum (strain LMG 29417 / CECT 9101 / MAFF 303099) (Mesorhizobium loti (strain MAFF 303099)).